Here is a 334-residue protein sequence, read N- to C-terminus: Beta-glucanase (334 aa).

An N-terminal signal peptide occupies residues 1 to 27; sequence MKNRVISLLMASLLLVLSVIVAPFYKA. Positions 28–248 constitute a GH16 domain; that stretch reads EAATVVNTPF…YVKYYPNGVP (221 aa). E136 (nucleophile) is an active-site residue. E140 acts as the Proton donor in catalysis. Residues 246-265 form a disordered region; it reads GVPQDNPTPTPTIAPSTPTN. Residues 267-334 form the Dockerin domain; it reads NLPLKGDVNG…RYLIRAIPSL (68 aa).

Belongs to the glycosyl hydrolase 16 family.

The enzyme catalyses Hydrolysis of (1-&gt;4)-beta-D-glucosidic linkages in beta-D-glucans containing (1-&gt;3)- and (1-&gt;4)-bonds.. The protein is Beta-glucanase (licB) of Acetivibrio thermocellus (Hungateiclostridium thermocellum).